We begin with the raw amino-acid sequence, 193 residues long: MNFLAHLHLAHLADSSLSGNLLADFVRGNPATHYPPDVVEGIYMHRRIDVMTDNLPEVREAREWFRHETRRVASITLDVMWDHFLSRHWTQISPDFPLQAFVGYAHAQVATILPDSPPRFVNLNDYLWSEKWLERYRDMDFIQNVLNGMANRRPRLDALRDSWYDLDAHYDALEERFWHFYPRMMAQAARKAL.

The protein belongs to the AcpH family.

It carries out the reaction holo-[ACP] + H2O = apo-[ACP] + (R)-4'-phosphopantetheine + H(+). Functionally, converts holo-ACP to apo-ACP by hydrolytic cleavage of the phosphopantetheine prosthetic group from ACP. This Salmonella agona (strain SL483) protein is Acyl carrier protein phosphodiesterase.